A 253-amino-acid chain; its full sequence is Triosephosphate isomerase (253 aa).

A substrate-binding site is contributed by 8–10 (NWK). Residue histidine 91 is the Electrophile of the active site. Residue glutamate 168 is the Proton acceptor of the active site. Substrate is bound by residues glycine 174, serine 213, and 234–235 (GG).

This sequence belongs to the triosephosphate isomerase family. In terms of assembly, homodimer.

The protein localises to the cytoplasm. It catalyses the reaction D-glyceraldehyde 3-phosphate = dihydroxyacetone phosphate. It participates in carbohydrate biosynthesis; gluconeogenesis. It functions in the pathway carbohydrate degradation; glycolysis; D-glyceraldehyde 3-phosphate from glycerone phosphate: step 1/1. In terms of biological role, involved in the gluconeogenesis. Catalyzes stereospecifically the conversion of dihydroxyacetone phosphate (DHAP) to D-glyceraldehyde-3-phosphate (G3P). This is Triosephosphate isomerase from Acidiphilium cryptum (strain JF-5).